The primary structure comprises 180 residues: Transcription factor HES-7.1-B (180 aa).

A bHLH domain is found at 13–70 (HRKLLKPLVEKRRRERINNSLEKLRIFLSQTLKSEKLKNPKVEKAEILECTVQFLQSR). Positions 84 to 116 (YQSGFQHCLETTLHFMNSKPDMNGVTKELLSHQ) constitute an Orange domain. A WRPW motif motif is present at residues 176–179 (WRPW).

Transcription repression requires formation of a complex with a corepressor protein of the Groucho/TLE family. In terms of tissue distribution, expressed in the presumptive midbrain-hindbrain boundary (MHB) as early as the early gastrula stage (stage 10.5). Expression in the MHB continues through to tailbud stage. Also transiently expressed in the eye anlage at late neurula stage.

The protein resides in the nucleus. In terms of biological role, transcriptional repressor. Represses transcription from both N box- and E box-containing promoters. Demarcates the prospective midbrain-hindbrain boundary (MHB) region in the neuroectoderm in early gastrulae embryos by repressing transcription of a number of target genes. This Xenopus laevis (African clawed frog) protein is Transcription factor HES-7.1-B (hes7.1-b).